Here is a 604-residue protein sequence, read N- to C-terminus: NADH-ubiquinone oxidoreductase chain 5 (604 aa).

A run of 16 helical transmembrane segments spans residues 2 to 22 (FSSL…LSIF), 41 to 61 (AFIT…ETII), 85 to 105 (MIFV…SLWY), 115 to 135 (FFKY…ANNL), 138 to 158 (LFIG…WWYG), 169 to 189 (AILY…WFLF), 209 to 231 (LPLL…HPWL), 239 to 259 (TPVS…FLLI), 271 to 291 (IQSL…ICAL), 299 to 318 (IIAF…IGIN), 323 to 345 (AFLH…GSII), 364 to 384 (MPFT…IPFL), 411 to 431 (LIAT…ALLG), 455 to 475 (LLIG…PTTV), 486 to 506 (LTAL…SLMT), and 582 to 602 (IKLY…LFNL).

This sequence belongs to the complex I subunit 5 family. In terms of assembly, core subunit of respiratory chain NADH dehydrogenase (Complex I) which is composed of 45 different subunits.

The protein resides in the mitochondrion inner membrane. The catalysed reaction is a ubiquinone + NADH + 5 H(+)(in) = a ubiquinol + NAD(+) + 4 H(+)(out). Functionally, core subunit of the mitochondrial membrane respiratory chain NADH dehydrogenase (Complex I) which catalyzes electron transfer from NADH through the respiratory chain, using ubiquinone as an electron acceptor. Essential for the catalytic activity and assembly of complex I. The polypeptide is NADH-ubiquinone oxidoreductase chain 5 (MT-ND5) (Equus caballus (Horse)).